Consider the following 240-residue polypeptide: tRNA (guanine-N(1)-)-methyltransferase (240 aa).

S-adenosyl-L-methionine contacts are provided by residues Gly-110 and 130-135 (IGDYVL).

Belongs to the RNA methyltransferase TrmD family. In terms of assembly, homodimer.

It localises to the cytoplasm. It carries out the reaction guanosine(37) in tRNA + S-adenosyl-L-methionine = N(1)-methylguanosine(37) in tRNA + S-adenosyl-L-homocysteine + H(+). Functionally, specifically methylates guanosine-37 in various tRNAs. The protein is tRNA (guanine-N(1)-)-methyltransferase of Macrococcus caseolyticus (strain JCSC5402) (Macrococcoides caseolyticum).